The primary structure comprises 653 residues: MALVRGAEPAAGPSRWLPTHVQVTVLRARGLRGKSSGAGSTSDAYTVIQVGREKYSTSVVEKTHGCPEWREECSFELPPGALDGLLRAQEADAGPAPWAASSAAACELVLTTMHRSLIGVDKFLGQATVALDEVFGAGRAQHTQWYKLHSKPGKKEKERGEIEVTIQFTRNNLSASMFDLSMKDKPRSPFSKIRDKMKGKKKYDLESASAILPSSAIEDPDLGSLGKMGKAKGFFLRNKLRKSSLTQSNTSLGSDSTLSSASGSLAYQGPGAELLTRSPSRSSWLSTEGGRDSAQSPKLFTHKRTYSDEANQMRVAPPRALLDLQGHLDAASRSSLCVNGSHIYNEEPQGPVRHRSSISGSLPSSGSLQAVSSRFSEEGPRSTDDTWPRGSRSNSSSEAVLGQEELSAQAKVLAPGASHPGEEEGARLPEGKPVQVATPIVASSEAVAEKEGARKEERKPRMGLFHHHHQGLSRSELGRRSSLGEKGGPILGASPHHSSSGEEKAKSSWFGLREAKDPTQKPSPHPVKPLSAAPVEGSPDRKQSRSSLSIALSSGLEKLKTVTSGSIQPVTQAPQAGQMVDTKRLKDSAVLDQSAKYYHLTHDELISLLLQRERELSQRDEHVQELESYIDRLLVRIMETSPTLLQIPPGPPK.

Residues 5–146 (RGAEPAAGPS…AGRAQHTQWY (142 aa)) form the C2 domain. 6 positions are modified to phosphoserine: Ser-176, Ser-283, Ser-286, Ser-307, Ser-357, and Ser-367. The segment at 269–300 (GPGAELLTRSPSRSSWLSTEGGRDSAQSPKLF) is disordered. The segment covering 277–286 (RSPSRSSWLS) has biased composition (polar residues). Disordered regions lie at residues 342–402 (HIYN…AVLG) and 415–548 (PGAS…RSSL). Residues 357-368 (SISGSLPSSGSL) show a composition bias toward low complexity. Positions 375-387 (FSEEGPRSTDDTW) are enriched in basic and acidic residues. Residues Ser-391 and Ser-395 each carry the phosphoserine modification. Basic and acidic residues-rich tracts occupy residues 420–430 (PGEEEGARLPE) and 447–460 (VAEK…ERKP). Ser-494, Ser-538, Ser-547, and Ser-553 each carry phosphoserine. Residues 586 to 648 (KDSAVLDQSA…ETSPTLLQIP (63 aa)) form the FIP-RBD domain.

Interacts with RAB11FIP4. Interacts with NAPG. Interacts with RO60. Interacts with RAB11A that has been activated by GTP binding. In terms of assembly, (Microbial infection) Interacts with Kaposi's sarcoma-associated herpesvirus/HHV-8 protein ORF45; this interaction results in the lysosomal degradation of ORF45 and the inhibition of viral particle release. Post-translationally, phosphorylated on serine and threonine residues. Phosphorylation at Ser-357 is PKA-dependent. In terms of tissue distribution, detected at low levels in heart, brain, placenta, lung, liver, adipocytes, kidney, spleen, skeletal muscle and pancreas.

It is found in the cytoplasm. It localises to the recycling endosome membrane. The protein localises to the early endosome membrane. Its subcellular location is the golgi apparatus membrane. The protein resides in the cytoplasmic vesicle. It is found in the secretory vesicle membrane. It localises to the mitochondrion membrane. Rab effector involved in protein trafficking from apical recycling endosomes to the apical plasma membrane. Involved in insulin granule exocytosis. May regulate V-ATPase intracellular transport in response to extracellular acidosis. In Homo sapiens (Human), this protein is Rab11 family-interacting protein 5.